The primary structure comprises 353 residues: Photosystem II protein D1 (353 aa).

Thr2 carries the N-acetylthreonine modification. The residue at position 2 (Thr2) is a Phosphothreonine. Helical transmembrane passes span 29–46 (YIGW…TATS), 118–133 (HFFI…EWEL), and 142–156 (WIAV…AATA). Residue His118 coordinates chlorophyll a. Tyr126 provides a ligand contact to pheophytin a. [CaMn4O5] cluster-binding residues include Asp170 and Glu189. The chain crosses the membrane as a helical span at residues 197-218 (FHMLGVAGVFGGSLFSAMHGSL). His198 contributes to the chlorophyll a binding site. Residues His215 and 264-265 (SF) contribute to the a quinone site. His215 contacts Fe cation. Residue His272 coordinates Fe cation. Residues 274–288 (FLAIWPVVGIWFTAL) traverse the membrane as a helical segment. [CaMn4O5] cluster-binding residues include His332, Glu333, Asp342, and Ala344. Positions 345 to 353 (SVEAPSING) are excised as a propeptide.

Belongs to the reaction center PufL/M/PsbA/D family. As to quaternary structure, PSII is composed of 1 copy each of membrane proteins PsbA, PsbB, PsbC, PsbD, PsbE, PsbF, PsbH, PsbI, PsbJ, PsbK, PsbL, PsbM, PsbT, PsbX, PsbY, PsbZ, Psb30/Ycf12, at least 3 peripheral proteins of the oxygen-evolving complex and a large number of cofactors. It forms dimeric complexes. The D1/D2 heterodimer binds P680, chlorophylls that are the primary electron donor of PSII, and subsequent electron acceptors. It shares a non-heme iron and each subunit binds pheophytin, quinone, additional chlorophylls, carotenoids and lipids. D1 provides most of the ligands for the Mn4-Ca-O5 cluster of the oxygen-evolving complex (OEC). There is also a Cl(-1) ion associated with D1 and D2, which is required for oxygen evolution. The PSII complex binds additional chlorophylls, carotenoids and specific lipids. serves as cofactor. Tyr-161 forms a radical intermediate that is referred to as redox-active TyrZ, YZ or Y-Z. Post-translationally, C-terminally processed by CTPA; processing is essential to allow assembly of the oxygen-evolving complex and thus photosynthetic growth.

The protein localises to the plastid. It localises to the chloroplast thylakoid membrane. It catalyses the reaction 2 a plastoquinone + 4 hnu + 2 H2O = 2 a plastoquinol + O2. Its function is as follows. Photosystem II (PSII) is a light-driven water:plastoquinone oxidoreductase that uses light energy to abstract electrons from H(2)O, generating O(2) and a proton gradient subsequently used for ATP formation. It consists of a core antenna complex that captures photons, and an electron transfer chain that converts photonic excitation into a charge separation. The D1/D2 (PsbA/PsbD) reaction center heterodimer binds P680, the primary electron donor of PSII as well as several subsequent electron acceptors. This chain is Photosystem II protein D1, found in Stigeoclonium helveticum (Green alga).